The following is a 344-amino-acid chain: Methionine import ATP-binding protein MetN (344 aa).

The 240-residue stretch at 2 to 241 folds into the ABC transporter domain; the sequence is IEINRVNKVF…PKTELARKFI (240 aa). Residue 38-45 participates in ATP binding; it reads GSSGAGKS.

The protein belongs to the ABC transporter superfamily. Methionine importer (TC 3.A.1.24) family. As to quaternary structure, the complex is composed of two ATP-binding proteins (MetN), two transmembrane proteins (MetI) and a solute-binding protein (MetQ).

Its subcellular location is the cell inner membrane. It carries out the reaction L-methionine(out) + ATP + H2O = L-methionine(in) + ADP + phosphate + H(+). The catalysed reaction is D-methionine(out) + ATP + H2O = D-methionine(in) + ADP + phosphate + H(+). In terms of biological role, part of the ABC transporter complex MetNIQ involved in methionine import. Responsible for energy coupling to the transport system. This is Methionine import ATP-binding protein MetN from Photobacterium profundum (strain SS9).